We begin with the raw amino-acid sequence, 348 residues long: Dihydroorotase (348 aa).

Zn(2+)-binding residues include H17 and H19. Residues 19-21 (HLR) and N45 contribute to the substrate site. Residues K103, H140, and H178 each coordinate Zn(2+). The residue at position 103 (K103) is an N6-carboxylysine. H140 provides a ligand contact to substrate. L223 contributes to the substrate binding site. D251 contributes to the Zn(2+) binding site. D251 is a catalytic residue. 2 residues coordinate substrate: H255 and A267.

It belongs to the metallo-dependent hydrolases superfamily. DHOase family. Class II DHOase subfamily. As to quaternary structure, homodimer. It depends on Zn(2+) as a cofactor.

The enzyme catalyses (S)-dihydroorotate + H2O = N-carbamoyl-L-aspartate + H(+). It participates in pyrimidine metabolism; UMP biosynthesis via de novo pathway; (S)-dihydroorotate from bicarbonate: step 3/3. Its function is as follows. Catalyzes the reversible cyclization of carbamoyl aspartate to dihydroorotate. This is Dihydroorotase from Shigella boydii serotype 4 (strain Sb227).